The following is a 422-amino-acid chain: Vitamin D3 receptor (422 aa).

The segment at residues 21 to 96 (PRICGVCGDR…IGMMKEFILT (76 aa)) is a DNA-binding region (nuclear receptor). The Zn(2+) site is built by Cys24, Cys27, Cys41, Cys44, Cys60, Cys66, Cys76, and Cys79. 2 NR C4-type zinc fingers span residues 24 to 44 (CGVC…CEGC) and 60 to 84 (CPFN…LKRC). The segment at 97–126 (DEEVQRKREMIMKRKEEEALKDSLRPKLSE) is hinge. An NR LBD domain is found at 127–418 (EQQHIIAILL…LTPLVLEVFG (292 aa)). Tyr143 lines the calcitriol pocket. A disordered region spans residues 161-185 (VSTGSYSPRPTLSFSGDSSSNSDLY). Residues 162–172 (STGSYSPRPTL) are compositionally biased toward polar residues. Residues 173–182 (SFSGDSSSNS) are compositionally biased toward low complexity. Ser232 is a calcitriol binding site. Residues 241 to 259 (KMIPGFRDLTSDDQIVLLK) are interaction with coactivator LXXLL motif. Residues Arg269, Ser273, His300, and His392 each coordinate calcitriol. The 9aaTAD motif lies at 411–419 (PLVLEVFGN).

The protein belongs to the nuclear hormone receptor family. NR1 subfamily. As to quaternary structure, homodimer in the absence of bound vitamin D3. Heterodimer with RXRA after vitamin D3 binding. Interacts with MED1, NCOA1, NCOA2, NCOA3 and NCOA6 coactivators, leading to a strong increase of transcription of target genes. Interacts with the corepressor NCOR1. Interacts with SNW1. Interacts with IRX4, the interaction does not affect its transactivation activity. Interacts with CRY1. Interacts with CRY2 in a ligand-dependent manner. Post-translationally, ubiquitinated by UBR5, leading to its degradation: UBR5 specifically recognizes and binds ligand-bound VDR when it is not associated with coactivators (NCOAs). In presence of NCOAs, the UBR5-degron is not accessible, preventing its ubiquitination and degradation.

The protein localises to the nucleus. The protein resides in the cytoplasm. Its function is as follows. Nuclear receptor for calcitriol, the active form of vitamin D3 which mediates the action of this vitamin on cells. Enters the nucleus upon vitamin D3 binding where it forms heterodimers with the retinoid X receptor/RXR. The VDR-RXR heterodimers bind to specific response elements on DNA and activate the transcription of vitamin D3-responsive target genes. Plays a central role in calcium homeostasis. Also functions as a receptor for the secondary bile acid lithocholic acid (LCA) and its metabolites. This Mus musculus (Mouse) protein is Vitamin D3 receptor (Vdr).